A 291-amino-acid chain; its full sequence is 4-diphosphocytidyl-2-C-methyl-D-erythritol kinase (291 aa).

K10 is an active-site residue. 94 to 104 (PVSAGLAGGSS) is a binding site for ATP. D136 is an active-site residue.

It belongs to the GHMP kinase family. IspE subfamily.

The catalysed reaction is 4-CDP-2-C-methyl-D-erythritol + ATP = 4-CDP-2-C-methyl-D-erythritol 2-phosphate + ADP + H(+). It participates in isoprenoid biosynthesis; isopentenyl diphosphate biosynthesis via DXP pathway; isopentenyl diphosphate from 1-deoxy-D-xylulose 5-phosphate: step 3/6. Catalyzes the phosphorylation of the position 2 hydroxy group of 4-diphosphocytidyl-2C-methyl-D-erythritol. In Listeria monocytogenes serotype 4a (strain HCC23), this protein is 4-diphosphocytidyl-2-C-methyl-D-erythritol kinase.